Here is a 469-residue protein sequence, read N- to C-terminus: Collagenase 3 (469 aa).

The signal sequence occupies residues Ser1–Ser17. Residues Ala18–Gly100 constitute a propeptide, activation peptide. Positions Pro92 to Val99 match the Cysteine switch motif. Cys94 lines the Zn(2+) pocket. An N-linked (GlcNAc...) asparagine glycan is attached at Asn115. Position 126 (Asp126) interacts with Ca(2+). N-linked (GlcNAc...) asparagine glycosylation occurs at Asn150. Residue Asp160 participates in Ca(2+) binding. Positions 170 and 172 each coordinate Zn(2+). 3 residues coordinate Ca(2+): Asp177, Gly178, and Leu182. Residue His185 participates in Zn(2+) binding. Residues Gly194 and Asp196 each coordinate Ca(2+). Zn(2+) is bound at residue His198. The Ca(2+) site is built by Asp200, Asp201, and Glu203. His220 is a Zn(2+) binding site. Glu221 is an active-site residue. His224, His230, and Met238 together coordinate Zn(2+). The interaction with collagen stretch occupies residues Pro266–Cys469. 4 Hemopexin repeats span residues Pro279 to Leu328, Pro329 to Lys375, Leu377 to Ile425, and Gly426 to Cys469. Residues Cys282 and Cys469 are joined by a disulfide bond. Residues Asp289, Ile291, Asp333, Ala335, Ala383, and Asp430 each coordinate Ca(2+).

This sequence belongs to the peptidase M10A family. Ca(2+) is required as a cofactor. Zn(2+) serves as cofactor. Post-translationally, the proenzyme is activated by removal of the propeptide; this cleavage can be effected by other matrix metalloproteinases and may involve several cleavage steps. Cleavage can also be autocatalytic, after partial maturation by another protease or after treatment with 4-aminophenylmercuric acetate (APMA) (in vitro).

It localises to the secreted. Its subcellular location is the extracellular space. It is found in the extracellular matrix. Plays a role in the degradation of extracellular matrix proteins including fibrillar collagen, fibronectin, TNC and ACAN. Cleaves several types of triple helical collagen. May also function by activating or degrading key regulatory proteins. Plays a role in wound healing, tissue remodeling, cartilage degradation, bone development, bone mineralization and ossification. The polypeptide is Collagenase 3 (mmp13) (Xenopus laevis (African clawed frog)).